Here is a 442-residue protein sequence, read N- to C-terminus: C4-dicarboxylate transport protein (442 aa).

Helical transmembrane passes span 10-30 (VQVLIAIVLGILVGFLFPSFG), 40-60 (FIKLIKMLIAPIIFATVVSGI), 77-97 (LIYFEVVTTFALVIGLVVANI), 149-169 (LLQVLLISVLFGFALTQLGTL), 185-205 (FVILGFVMRLAPIGAFGAMAF), 221-241 (LMVAFYATCLLFVFVVLGLIA), 288-308 (VVGLVVPAGYSFNLDGTSIYL), and 354-374 (AATLSAVGHVPVAGLALILGI). Positions 420–442 (PATPEVAAEERGEGRGLDGPLPA) are disordered.

Belongs to the dicarboxylate/amino acid:cation symporter (DAACS) (TC 2.A.23) family.

Its subcellular location is the cell membrane. Responsible for the transport of dicarboxylates such as succinate, fumarate, and malate across the membrane. This is C4-dicarboxylate transport protein from Deinococcus geothermalis (strain DSM 11300 / CIP 105573 / AG-3a).